Here is a 63-residue protein sequence, read N- to C-terminus: ATP synthase F(0) complex subunit 8 (63 aa).

The helical transmembrane segment at 8-24 threads the bilayer; that stretch reads MWLLTILSMLLTLFVLF. Position 57 is an N6-acetyllysine (K57).

Belongs to the ATPase protein 8 family. In terms of assembly, component of the ATP synthase complex composed at least of ATP5F1A/subunit alpha, ATP5F1B/subunit beta, ATP5MC1/subunit c (homooctomer), MT-ATP6/subunit a, MT-ATP8/subunit 8, ATP5ME/subunit e, ATP5MF/subunit f, ATP5MG/subunit g, ATP5MK/subunit k, ATP5MJ/subunit j, ATP5F1C/subunit gamma, ATP5F1D/subunit delta, ATP5F1E/subunit epsilon, ATP5PF/subunit F6, ATP5PB/subunit b, ATP5PD/subunit d, ATP5PO/subunit OSCP. ATP synthase complex consists of a soluble F(1) head domain (subunits alpha(3) and beta(3)) - the catalytic core - and a membrane F(0) domain - the membrane proton channel (subunits c, a, 8, e, f, g, k and j). These two domains are linked by a central stalk (subunits gamma, delta, and epsilon) rotating inside the F1 region and a stationary peripheral stalk (subunits F6, b, d, and OSCP). Interacts with PRICKLE3.

It localises to the mitochondrion membrane. Its function is as follows. Subunit 8, of the mitochondrial membrane ATP synthase complex (F(1)F(0) ATP synthase or Complex V) that produces ATP from ADP in the presence of a proton gradient across the membrane which is generated by electron transport complexes of the respiratory chain. ATP synthase complex consist of a soluble F(1) head domain - the catalytic core - and a membrane F(1) domain - the membrane proton channel. These two domains are linked by a central stalk rotating inside the F(1) region and a stationary peripheral stalk. During catalysis, ATP synthesis in the catalytic domain of F(1) is coupled via a rotary mechanism of the central stalk subunits to proton translocation. In vivo, can only synthesize ATP although its ATP hydrolase activity can be activated artificially in vitro. Part of the complex F(0) domain. The chain is ATP synthase F(0) complex subunit 8 from Balaenoptera physalus (Fin whale).